Consider the following 128-residue polypeptide: Holin-like protein CidA (128 aa).

A run of 3 helical transmembrane segments spans residues 23–43 (LIVEVLHINIPGSILGIIVIF), 58–78 (IGALWLLAELLLFFVPSAVGI), and 84–104 (ILAEFGTSIILVVLISTFVVM).

Belongs to the CidA/LrgA family. CidA subfamily.

The protein localises to the cell membrane. In terms of biological role, increases the activity of extracellular murein hydrolases possibly by mediating their export via hole formation. Inhibited by the antiholin-like proteins LrgAB. In an unstressed cell, the LrgAB products probably inhibit the function of the CidA protein. When a cell is stressed by the addition of antibiotics or by other factors in the environment, CidA possibly oligomerizes within the bacterial cell membrane, creating lesions that disrupt the proton motive force, which in turn results in loss of cell viability. These lesions are also hypothesized to regulate the subsequent cell lysis by either allowing the murein hydrolases access to the cell wall substrate and/or regulating their activity by a possible change in the cell wall pH that results from loss of membrane potential. This Bacillus licheniformis (strain ATCC 14580 / DSM 13 / JCM 2505 / CCUG 7422 / NBRC 12200 / NCIMB 9375 / NCTC 10341 / NRRL NRS-1264 / Gibson 46) protein is Holin-like protein CidA.